The chain runs to 169 residues: Positive control factor (169 aa).

The H-T-H motif DNA-binding region spans Tyr132 to Met157.

Its function is as follows. Positive regulatory protein that acts at the late promoter PL. The protein is Positive control factor (xpf) of Bacillus subtilis (strain 168).